The sequence spans 572 residues: Alpha-1D adrenergic receptor (572 aa).

The interval 1–77 (MTFRDLLSVS…SAGEPGSAGA (77 aa)) is disordered. Residues 1–95 (MTFRDLLSVS…AVGGLVVSAQ (95 aa)) are Extracellular-facing. Composition is skewed to gly residues over residues 23–33 (SSAGGGGGSAG) and 42–61 (AVGG…GAGS). Residues asparagine 65 and asparagine 82 are each glycosylated (N-linked (GlcNAc...) asparagine). The helical transmembrane segment at 96–121 (GVGVGVFLAAFILMAVAGNLLVILSV) threads the bilayer. Residues 122–133 (ACNRHLQTVTNY) are Cytoplasmic-facing. A helical membrane pass occupies residues 134-159 (FIVNLAVADLLLSATVLPFSATMEVL). The Extracellular segment spans residues 160–169 (GFWAFGRAFC). The helical transmembrane segment at 170–192 (DVWAAVDVLCCTASILSLCTISV) threads the bilayer. Residues 193-213 (DRYVGVRHSLKYPAIMTERKA) are Cytoplasmic-facing. Residues 214–238 (AAILALLWVVALVVSVGPLLGWKEP) form a helical membrane-spanning segment. The Extracellular segment spans residues 239–251 (VPPDERFCGITEE). A helical transmembrane segment spans residues 252–275 (AGYAVFSSVCSFYLPMAVIVVMYC). Residues 276 to 348 (RVYVVARSTT…KFSREKKAAK (73 aa)) lie on the Cytoplasmic side of the membrane. Residues 349–373 (TLAIVVGVFVLCWFPFFFVLPLGSL) form a helical membrane-spanning segment. Over 374–380 (FPQLKPS) the chain is Extracellular. A helical transmembrane segment spans residues 381-405 (EGVFKVIFWLGYFNSCVNPLIYPCS). Residues 406-572 (SREFKRAFLR…DYSNLRETDI (167 aa)) are Cytoplasmic-facing. The S-palmitoyl cysteine moiety is linked to residue cysteine 419. A disordered region spans residues 444-488 (GLRQDCAPSSGDAPPGAPLALTALPDPDPEPPGTPEMQAPVASRR). Over residues 450-468 (APSSGDAPPGAPLALTALP) the composition is skewed to low complexity.

This sequence belongs to the G-protein coupled receptor 1 family. Adrenergic receptor subfamily. ADRA1D sub-subfamily. In terms of assembly, interacts with FLNA (via filamin repeat 21); increases PKA-mediated phosphorylation of FLNA. Palmitoylated. Palmitoylation by ZDHHC21 may increase the expression of the receptor and regulate downstream signaling.

It localises to the cell membrane. This alpha-adrenergic receptor mediates its effect through the influx of extracellular calcium. The chain is Alpha-1D adrenergic receptor (ADRA1D) from Homo sapiens (Human).